Here is a 263-residue protein sequence, read N- to C-terminus: Esterase mokD (263 aa).

Catalysis depends on charge relay system residues Ser134, Asp208, and His236.

It belongs to the LovG family.

It carries out the reaction dihydromonacolin L-[lovastatin nonaketide synthase] + H2O = holo-[lovastatin nonaketide synthase] + dihydromonacolin L carboxylate + H(+). The protein operates within polyketide biosynthesis; lovastatin biosynthesis. Its function is as follows. Esterase; part of the gene cluster that mediates the biosynthesis of monakolin K, also known as lovastatin, and which acts as a potent competitive inhibitor of HMG-CoA reductase. Monakolin K biosynthesis is performed in two stages. The first stage is catalyzed by the nonaketide synthase mokA, which belongs to type I polyketide synthases and catalyzes the iterative nine-step formation of the polyketide. This PKS stage completed by the action of dehydrogenase mokE, which catalyzes the NADPH-dependent reduction of the unsaturated tetra-, penta- and heptaketide intermediates that arise during the mokA-mediated biosynthesis of the nonaketide chain and leads to dihydromonacolin L. Covalently bound dihydromonacolin L is released from mokA by the mokD esterase. Conversion of dihydromonacolin L into monacolin L and then monacolin J is subsequently performed with the participation of molecular oxygen and P450 monoogygenase mokC. Finally, mokF performs the conversion of monacoline J to monacoline K through the addition of the side-chain diketide moiety (2R)-2-methylbutanoate produced by the diketide synthase mokB. In Monascus pilosus (Red mold), this protein is Esterase mokD.